The primary structure comprises 128 residues: Small ribosomal subunit protein uS11 (128 aa).

This sequence belongs to the universal ribosomal protein uS11 family. As to quaternary structure, part of the 30S ribosomal subunit. Interacts with proteins S7 and S18. Binds to IF-3.

In terms of biological role, located on the platform of the 30S subunit, it bridges several disparate RNA helices of the 16S rRNA. Forms part of the Shine-Dalgarno cleft in the 70S ribosome. This Desulfatibacillum aliphaticivorans protein is Small ribosomal subunit protein uS11.